We begin with the raw amino-acid sequence, 294 residues long: Nucleotide-binding protein CLK_2809 (294 aa).

8–15 (GLSGAGKT) serves as a coordination point for ATP. GTP is bound at residue 59 to 62 (DIRG).

It belongs to the RapZ-like family.

Its function is as follows. Displays ATPase and GTPase activities. In Clostridium botulinum (strain Loch Maree / Type A3), this protein is Nucleotide-binding protein CLK_2809.